The primary structure comprises 438 residues: DEAD-box ATP-dependent RNA helicase CshB (438 aa).

Positions 4 to 32 (TKFELYELKPFIIDAVHRLGFYEPTDIQK) match the Q motif motif. Residues 35-208 (IPAVLKKESV…KKYMENPKYA (174 aa)) enclose the Helicase ATP-binding domain. 48 to 55 (SQTGTGKT) is a binding site for ATP. A DEAD box motif is present at residues 156–159 (DEAD). The region spanning 235–385 (LLFDIMSHLN…EWKKGDDRQR (151 aa)) is the Helicase C-terminal domain. A disordered region spans residues 380 to 438 (GDDRQRRKKRKKTPNEADEIAHRLVKKPKKVKPGYKKKMSYEMEKIKKKQRRNQSKKRK). Residues 392 to 401 (TPNEADEIAH) are compositionally biased toward basic and acidic residues. Composition is skewed to basic residues over residues 402 to 417 (RLVKKPKKVKPGYKKK) and 425 to 438 (IKKKQRRNQSKKRK).

The protein belongs to the DEAD box helicase family. Interacts with CspB when cells are transcriptionally active. May interact with RNA helicases CshA and DbpA (DeaD), may be a component of a possible RNA degradosome complex composed of rny, rnja, rnjb, pnp, pfkA and eno (although rnjA and rnjB's presence is unclear). Specifically interacts with pnp and rny.

Its subcellular location is the cytoplasm. It localises to the nucleoid. It carries out the reaction ATP + H2O = ADP + phosphate + H(+). Functionally, DEAD-box RNA helicase that plays a role in 70S ribosome assembly. May work in conjunction with the cold shock proteins to ensure proper initiation of transcription at low and optimal temperatures. This is DEAD-box ATP-dependent RNA helicase CshB from Bacillus subtilis (strain 168).